A 347-amino-acid chain; its full sequence is Putative ORC1-type DNA replication protein 1 (347 aa).

ATP-binding positions include T34–V38, Y167, and R179.

It belongs to the CDC6/cdc18 family.

Involved in regulation of DNA replication. Has no effect on MCM helicase activity, either stimulatory or inhibitory. Does not bind DNA. The sequence is that of Putative ORC1-type DNA replication protein 1 (cdc6-1) from Thermoplasma acidophilum (strain ATCC 25905 / DSM 1728 / JCM 9062 / NBRC 15155 / AMRC-C165).